Reading from the N-terminus, the 240-residue chain is RNA polymerase sigma factor SigI (240 aa).

Residues 56 to 69 (DEYSIGLFAFNEAI) carry the Polymerase core binding motif. A DNA-binding region (H-T-H motif) is located at residues 194–213 (LKHIEPRVRVSRKTLERHRK).

It belongs to the sigma-70 factor family. SigI subfamily. In terms of assembly, interacts with RsgI.

The protein resides in the cytoplasm. Its activity is regulated as follows. Negatively regulated by the anti-sigma-I factor RsgI. Functionally, sigma factors are initiation factors that promote the attachment of RNA polymerase to specific initiation sites and are then released. This sigma factor contributes to both stress response and virulence gene expression. This Bacillus anthracis protein is RNA polymerase sigma factor SigI.